Reading from the N-terminus, the 500-residue chain is Cytochrome P450 71B34 (500 aa).

A helical membrane pass occupies residues 1 to 21 (MTNIWLLSLIFVICILVAVFN). A heme-binding site is contributed by cysteine 440.

Belongs to the cytochrome P450 family. Requires heme as cofactor.

It localises to the membrane. This Arabidopsis thaliana (Mouse-ear cress) protein is Cytochrome P450 71B34 (CYP71B34).